A 169-amino-acid polypeptide reads, in one-letter code: Peptide deformylase (169 aa).

Fe cation is bound by residues C91 and H133. Residue E134 is part of the active site. H137 lines the Fe cation pocket.

The protein belongs to the polypeptide deformylase family. It depends on Fe(2+) as a cofactor.

The catalysed reaction is N-terminal N-formyl-L-methionyl-[peptide] + H2O = N-terminal L-methionyl-[peptide] + formate. Functionally, removes the formyl group from the N-terminal Met of newly synthesized proteins. Requires at least a dipeptide for an efficient rate of reaction. N-terminal L-methionine is a prerequisite for activity but the enzyme has broad specificity at other positions. The sequence is that of Peptide deformylase from Enterobacter sp. (strain 638).